The primary structure comprises 551 residues: mRNA cap guanine-N(7) methyltransferase (551 aa).

Residues 1 to 10 show a composition bias toward polar residues; it reads MENRSSSGTP. The tract at residues 1–152 is disordered; the sequence is MENRSSSGTP…DRETLRRRQE (152 aa). Basic and acidic residues-rich tracts occupy residues 48-76 and 141-152; these read VTEE…EERH and LVDRETLRRRQE. Residues 194–551 form the mRNA cap 0 methyltransferase domain; the sequence is SKIKGLRSFN…FYHAFCFYKV (358 aa). 203-204 is a binding site for mRNA; sequence NN. Residues Lys207, Gly250, Asp274, Asp312, 355–357, and Tyr360 contribute to the S-adenosyl-L-methionine site; that span reads MFA. The segment at 407-430 is disordered; sequence KAREEQEKKEKSDEAPEDGEVEED. The segment covering 408–420 has biased composition (basic and acidic residues); the sequence is AREEQEKKEKSDE. A compositionally biased stretch (acidic residues) spans 421–430; the sequence is APEDGEVEED.

The protein belongs to the class I-like SAM-binding methyltransferase superfamily. mRNA cap 0 methyltransferase family.

Its subcellular location is the nucleus. The catalysed reaction is a 5'-end (5'-triphosphoguanosine)-ribonucleoside in mRNA + S-adenosyl-L-methionine = a 5'-end (N(7)-methyl 5'-triphosphoguanosine)-ribonucleoside in mRNA + S-adenosyl-L-homocysteine. In terms of biological role, responsible for methylating the 5'-cap structure of mRNAs. The protein is mRNA cap guanine-N(7) methyltransferase (abd1) of Aspergillus clavatus (strain ATCC 1007 / CBS 513.65 / DSM 816 / NCTC 3887 / NRRL 1 / QM 1276 / 107).